The following is a 273-amino-acid chain: Formamidopyrimidine-DNA glycosylase (273 aa).

The active-site Schiff-base intermediate with DNA is proline 2. Glutamate 3 (proton donor) is an active-site residue. Lysine 58 (proton donor; for beta-elimination activity) is an active-site residue. Histidine 92, arginine 111, and arginine 153 together coordinate DNA. The segment at 238 to 272 (RVYGREGQKCFNCSSTILKTKNSGRSTFYCKTCQY) adopts an FPG-type zinc-finger fold. Arginine 262 acts as the Proton donor; for delta-elimination activity in catalysis.

It belongs to the FPG family. Monomer. Zn(2+) serves as cofactor.

The catalysed reaction is Hydrolysis of DNA containing ring-opened 7-methylguanine residues, releasing 2,6-diamino-4-hydroxy-5-(N-methyl)formamidopyrimidine.. It carries out the reaction 2'-deoxyribonucleotide-(2'-deoxyribose 5'-phosphate)-2'-deoxyribonucleotide-DNA = a 3'-end 2'-deoxyribonucleotide-(2,3-dehydro-2,3-deoxyribose 5'-phosphate)-DNA + a 5'-end 5'-phospho-2'-deoxyribonucleoside-DNA + H(+). Its function is as follows. Involved in base excision repair of DNA damaged by oxidation or by mutagenic agents. Acts as a DNA glycosylase that recognizes and removes damaged bases. Has a preference for oxidized purines, such as 7,8-dihydro-8-oxoguanine (8-oxoG). Has AP (apurinic/apyrimidinic) lyase activity and introduces nicks in the DNA strand. Cleaves the DNA backbone by beta-delta elimination to generate a single-strand break at the site of the removed base with both 3'- and 5'-phosphates. In Rickettsia canadensis (strain McKiel), this protein is Formamidopyrimidine-DNA glycosylase.